Consider the following 379-residue polypeptide: Anhydro-N-acetylmuramic acid kinase (379 aa).

Residue 9 to 16 (GTSVDGID) coordinates ATP.

This sequence belongs to the anhydro-N-acetylmuramic acid kinase family.

The enzyme catalyses 1,6-anhydro-N-acetyl-beta-muramate + ATP + H2O = N-acetyl-D-muramate 6-phosphate + ADP + H(+). Its pathway is amino-sugar metabolism; 1,6-anhydro-N-acetylmuramate degradation. It participates in cell wall biogenesis; peptidoglycan recycling. In terms of biological role, catalyzes the specific phosphorylation of 1,6-anhydro-N-acetylmuramic acid (anhMurNAc) with the simultaneous cleavage of the 1,6-anhydro ring, generating MurNAc-6-P. Is required for the utilization of anhMurNAc either imported from the medium or derived from its own cell wall murein, and thus plays a role in cell wall recycling. The chain is Anhydro-N-acetylmuramic acid kinase from Picosynechococcus sp. (strain ATCC 27264 / PCC 7002 / PR-6) (Agmenellum quadruplicatum).